A 380-amino-acid polypeptide reads, in one-letter code: Interleukin-13 receptor subunit alpha-2 (380 aa).

Residues M1–S26 form the signal peptide. Residues D27–R343 are Extracellular-facing. Fibronectin type-III domains follow at residues P34–G134, K139–I235, and P240–G333. Residues C65 and C113 are joined by a disulfide bond. Residue N115 is glycosylated (N-linked (GlcNAc...) asparagine). 2 cysteine pairs are disulfide-bonded: C145–C155 and C184–C197. N-linked (GlcNAc...) asparagine glycans are attached at residues N215, N290, and N299. A disulfide bridge connects residues C269 and C316. The short motif at W322–S326 is the WSXWS motif element. A helical membrane pass occupies residues F344–L363. The Cytoplasmic portion of the chain corresponds to R364–T380.

It belongs to the type I cytokine receptor family. Type 5 subfamily. As to quaternary structure, interacts with IL4RA. Interacts with high affinity to interleukin-13 (IL13), but not to interleukin-4 (IL4). Post-translationally, cleaved by MMP8 leading to a soluble form that is also able to interact with IL13.

Its subcellular location is the cell membrane. Cell surface receptor that plays a role in the regulation of IL-13-mediated responses. Functions as a decoy receptor that inhibits IL-13- and IL-4-mediated signal transduction via the JAK-STAT pathway and thereby modulates immune responses and inflammation. Serves as a functional signaling receptor for IL-13 in an alternative pathway involving AP-1 ultimately leading to the production of TGFB1. The sequence is that of Interleukin-13 receptor subunit alpha-2 (IL13RA2) from Homo sapiens (Human).